We begin with the raw amino-acid sequence, 277 residues long: Ribosomal RNA small subunit methyltransferase A (277 aa).

S-adenosyl-L-methionine-binding residues include Asn20, Leu22, Gly47, Glu68, Asp93, and Asn114.

It belongs to the class I-like SAM-binding methyltransferase superfamily. rRNA adenine N(6)-methyltransferase family. RsmA subfamily.

Its subcellular location is the cytoplasm. It catalyses the reaction adenosine(1518)/adenosine(1519) in 16S rRNA + 4 S-adenosyl-L-methionine = N(6)-dimethyladenosine(1518)/N(6)-dimethyladenosine(1519) in 16S rRNA + 4 S-adenosyl-L-homocysteine + 4 H(+). Specifically dimethylates two adjacent adenosines (A1518 and A1519) in the loop of a conserved hairpin near the 3'-end of 16S rRNA in the 30S particle. May play a critical role in biogenesis of 30S subunits. The chain is Ribosomal RNA small subunit methyltransferase A from Aliivibrio salmonicida (strain LFI1238) (Vibrio salmonicida (strain LFI1238)).